The chain runs to 121 residues: Inner membrane protein YhaH (121 aa).

Topologically, residues 1–23 are periplasmic; the sequence is MDWYLKVLKNYVGFRGRARRKEY. The helical transmembrane segment at 24–44 threads the bilayer; that stretch reads WMFILVNIIFTFVLGLLDKML. The Cytoplasmic portion of the chain corresponds to 45 to 49; it reads GWQRA. The helical transmembrane segment at 50–70 threads the bilayer; the sequence is GGEGILTTIYGILVFLPWWAV. The Periplasmic segment spans residues 71 to 80; that stretch reads QFRRLHDTDR. The helical transmembrane segment at 81–101 threads the bilayer; that stretch reads SAWWALLFLIPFIGWLIIIVF. The Cytoplasmic portion of the chain corresponds to 102–121; sequence NCQAGTPGENRFGPDPKLEP.

To E.coli YhaI.

Its subcellular location is the cell inner membrane. The sequence is that of Inner membrane protein YhaH (yhaH) from Escherichia coli O157:H7.